Consider the following 518-residue polypeptide: uncharacterized protein (518 aa).

14 consecutive transmembrane segments (helical) span residues 13–33, 49–69, 86–106, 109–129, 141–161, 169–189, 202–222, 231–251, 280–300, 312–332, 341–361, 365–385, 410–430, and 493–513; these read WAIS…GIIS, WGSW…PIVG, CLFG…LFLI, LIQA…ILAT, LLGA…SFLL, WLFL…ACFI, AAGI…MTNL, LGNP…AALI, LIIG…PSYV, GYWM…GGAL, TVIL…LWVT, EFVI…GAPL, IGLT…FDQI, and LYAA…IPAF.

This sequence belongs to the major facilitator superfamily. TCR/Tet family.

It localises to the cell membrane. This is an uncharacterized protein from Bacillus subtilis (strain 168).